The primary structure comprises 191 residues: Ribosomal RNA small subunit methyltransferase G (191 aa).

S-adenosyl-L-methionine-binding positions include Gly-62, Leu-67, Ile-111–Glu-112, and Arg-124.

Belongs to the methyltransferase superfamily. RNA methyltransferase RsmG family.

The protein localises to the cytoplasm. The catalysed reaction is guanosine(527) in 16S rRNA + S-adenosyl-L-methionine = N(7)-methylguanosine(527) in 16S rRNA + S-adenosyl-L-homocysteine. Its function is as follows. Specifically methylates the N7 position of guanine in position 527 of 16S rRNA. This chain is Ribosomal RNA small subunit methyltransferase G, found in Rickettsia rickettsii (strain Sheila Smith).